A 152-amino-acid chain; its full sequence is Nucleoside diphosphate kinase A (152 aa).

ATP contacts are provided by Lys12, Phe60, Arg88, and Thr94. A Glycyl lysine isopeptide (Lys-Gly) (interchain with G-Cter in ubiquitin) cross-link involves residue Lys100. Arg105 and Asn115 together coordinate ATP. His118 functions as the Pros-phosphohistidine intermediate in the catalytic mechanism. A phosphoserine mark is found at Ser120, Ser122, and Ser125.

This sequence belongs to the NDK family. Hexamer of two different chains: An and B (A6, A5B, A4B2, A3B3, A2B4, AB5, B6). Interacts with PRUNE1. Component of the SET complex, composed of at least ANP32A, APEX1, HMGB2, NME1, SET and TREX1. Within this complex, interacts directly with SET. Also interacts with TREX1, but only following translocation to the nucleus. The cofactor is Mg(2+). Isoform 1 is expressed in heart, brain, placenta, lung, liver, skeletal muscle, pancreas, spleen and thymus. Expressed in lung carcinoma cell lines but not in normal lung tissues. Isoform 2 is ubiquitously expressed and its expression is also related to tumor differentiation.

It is found in the cytoplasm. It localises to the nucleus. The enzyme catalyses a 2'-deoxyribonucleoside 5'-diphosphate + ATP = a 2'-deoxyribonucleoside 5'-triphosphate + ADP. It carries out the reaction a ribonucleoside 5'-diphosphate + ATP = a ribonucleoside 5'-triphosphate + ADP. With respect to regulation, autophosphorylation at His-118 increases serine/threonine protein kinase activity of the enzyme. Interaction with the SET complex inhibits the endonuclease activity. Major role in the synthesis of nucleoside triphosphates other than ATP. The ATP gamma phosphate is transferred to the NDP beta phosphate via a ping-pong mechanism, using a phosphorylated active-site intermediate. Possesses nucleoside-diphosphate kinase, serine/threonine-specific protein kinase, geranyl and farnesyl pyrophosphate kinase, histidine protein kinase and 3'-5' exonuclease activities. Involved in cell proliferation, differentiation and development, signal transduction, G protein-coupled receptor endocytosis, and gene expression. Required for neural development including neural patterning and cell fate determination. During GZMA-mediated cell death, works in concert with TREX1. NME1 nicks one strand of DNA and TREX1 removes bases from the free 3' end to enhance DNA damage and prevent DNA end reannealing and rapid repair. The sequence is that of Nucleoside diphosphate kinase A (NME1) from Homo sapiens (Human).